Consider the following 270-residue polypeptide: UPF0354 protein BCE_4835 (270 aa).

The protein belongs to the UPF0354 family.

The sequence is that of UPF0354 protein BCE_4835 from Bacillus cereus (strain ATCC 10987 / NRS 248).